Reading from the N-terminus, the 579-residue chain is Type II methyltransferase M.BseCI (579 aa).

Belongs to the N(4)/N(6)-methyltransferase family.

The enzyme catalyses a 2'-deoxyadenosine in DNA + S-adenosyl-L-methionine = an N(6)-methyl-2'-deoxyadenosine in DNA + S-adenosyl-L-homocysteine + H(+). In terms of biological role, a gamma subtype methylase, recognizes the double-stranded sequence 5'-ATCGAT-3', methylation on A-5 on both strands, and protects the DNA from cleavage by the BanIII endonuclease. This is Type II methyltransferase M.BseCI from Geobacillus stearothermophilus (Bacillus stearothermophilus).